A 250-amino-acid chain; its full sequence is N-acetylmuramoyl-L-alanine amidase CwlH (250 aa).

Positions 1 to 44 (MVTIKKDFIPVSNDNRPGYAMAPAYITVHNTANTAKGADAKMHA) are cleaved as a signal peptide. An N-acetylmuramoyl-L-alanine amidase domain is found at 45 to 141 (KFVKNPNTSE…KKWSGKECPR (97 aa)).

Belongs to the N-acetylmuramoyl-L-alanine amidase 2 family.

It localises to the secreted. The catalysed reaction is Hydrolyzes the link between N-acetylmuramoyl residues and L-amino acid residues in certain cell-wall glycopeptides.. In terms of biological role, autolysins are involved in some important biological processes such as cell separation, cell-wall turnover, competence for genetic transformation, formation of the flagella and sporulation. Could play a role in mother cell lysis with CwlC. The polypeptide is N-acetylmuramoyl-L-alanine amidase CwlH (cwlH) (Bacillus subtilis (strain 168)).